A 198-amino-acid polypeptide reads, in one-letter code: Imidazoleglycerol-phosphate dehydratase (198 aa).

It belongs to the imidazoleglycerol-phosphate dehydratase family.

The protein localises to the cytoplasm. It carries out the reaction D-erythro-1-(imidazol-4-yl)glycerol 3-phosphate = 3-(imidazol-4-yl)-2-oxopropyl phosphate + H2O. It functions in the pathway amino-acid biosynthesis; L-histidine biosynthesis; L-histidine from 5-phospho-alpha-D-ribose 1-diphosphate: step 6/9. The chain is Imidazoleglycerol-phosphate dehydratase from Methylobacillus flagellatus (strain ATCC 51484 / DSM 6875 / VKM B-1610 / KT).